The sequence spans 397 residues: Acetate kinase 2 (397 aa).

Position 10 (Asn10) interacts with Mg(2+). Lys17 serves as a coordination point for ATP. Position 90 (Arg90) interacts with substrate. The active-site Proton donor/acceptor is Asp147. ATP-binding positions include 207-211, 281-283, and 329-333; these read HLGNG, DAR, and GIGEN. Glu385 contributes to the Mg(2+) binding site.

Belongs to the acetokinase family. Homodimer. Mg(2+) is required as a cofactor. Requires Mn(2+) as cofactor.

Its subcellular location is the cytoplasm. It catalyses the reaction acetate + ATP = acetyl phosphate + ADP. The protein operates within metabolic intermediate biosynthesis; acetyl-CoA biosynthesis; acetyl-CoA from acetate: step 1/2. Its function is as follows. Catalyzes the formation of acetyl phosphate from acetate and ATP. Can also catalyze the reverse reaction. The sequence is that of Acetate kinase 2 from Vibrio cholerae serotype O1 (strain ATCC 39315 / El Tor Inaba N16961).